The primary structure comprises 375 residues: uncharacterized protein (375 aa).

It belongs to the mimivirus L17x/L18x family.

This is an uncharacterized protein from Acanthamoeba polyphaga mimivirus (APMV).